We begin with the raw amino-acid sequence, 360 residues long: Glutamate 5-kinase (360 aa).

Lysine 7 is an ATP binding site. Substrate-binding residues include serine 47, aspartate 134, and asparagine 146. ATP-binding positions include 166–167 (TD) and 210–216 (TGGITTK). Residues 275 to 348 (VGQITLDEGA…LNKKENINSS (74 aa)) enclose the PUA domain.

It belongs to the glutamate 5-kinase family.

It localises to the cytoplasm. The catalysed reaction is L-glutamate + ATP = L-glutamyl 5-phosphate + ADP. It participates in amino-acid biosynthesis; L-proline biosynthesis; L-glutamate 5-semialdehyde from L-glutamate: step 1/2. Its function is as follows. Catalyzes the transfer of a phosphate group to glutamate to form L-glutamate 5-phosphate. This Prochlorococcus marinus subsp. pastoris (strain CCMP1986 / NIES-2087 / MED4) protein is Glutamate 5-kinase.